We begin with the raw amino-acid sequence, 122 residues long: Large ribosomal subunit protein uL14 (122 aa).

It belongs to the universal ribosomal protein uL14 family. Part of the 50S ribosomal subunit. Forms a cluster with proteins L3 and L19. In the 70S ribosome, L14 and L19 interact and together make contacts with the 16S rRNA in bridges B5 and B8.

Binds to 23S rRNA. Forms part of two intersubunit bridges in the 70S ribosome. The sequence is that of Large ribosomal subunit protein uL14 from Sinorhizobium fredii (strain NBRC 101917 / NGR234).